The following is a 748-amino-acid chain: NAD(P)H-quinone oxidoreductase subunit 5, chloroplastic (748 aa).

16 helical membrane-spanning segments follow: residues 9–29 (WIIP…LLLF), 40–60 (WSFP…YLSI), 89–109 (IDPL…MVLI), 125–145 (FAYM…SNLI), 147–167 (IYIF…FWFT), 185–205 (GDFG…SFEF), 219–239 (NEVN…GAVA), 258–278 (TPIS…FLVA), 280–300 (LLPL…IGII), 327–347 (LGYM…FHLI), 354–374 (ALLF…VGYS), 396–416 (NAFL…CFWS), 425–445 (WLYS…TAFY), 550–570 (LFPM…GSPF), 611–631 (ATFS…FYKP), and 728–748 (YILL…FVFF).

The protein belongs to the complex I subunit 5 family. As to quaternary structure, NDH is composed of at least 16 different subunits, 5 of which are encoded in the nucleus.

It is found in the plastid. The protein localises to the chloroplast thylakoid membrane. The enzyme catalyses a plastoquinone + NADH + (n+1) H(+)(in) = a plastoquinol + NAD(+) + n H(+)(out). The catalysed reaction is a plastoquinone + NADPH + (n+1) H(+)(in) = a plastoquinol + NADP(+) + n H(+)(out). In terms of biological role, NDH shuttles electrons from NAD(P)H:plastoquinone, via FMN and iron-sulfur (Fe-S) centers, to quinones in the photosynthetic chain and possibly in a chloroplast respiratory chain. The immediate electron acceptor for the enzyme in this species is believed to be plastoquinone. Couples the redox reaction to proton translocation, and thus conserves the redox energy in a proton gradient. This chain is NAD(P)H-quinone oxidoreductase subunit 5, chloroplastic (ndhF), found in Cucumis sativus (Cucumber).